Here is a 452-residue protein sequence, read N- to C-terminus: Ethanolamine kinase 1 (452 aa).

Positions alanine 26–threonine 64 are disordered. Residues alanine 43–leucine 53 show a composition bias toward pro residues.

This sequence belongs to the choline/ethanolamine kinase family. In terms of tissue distribution, expressed in kidney, liver, placenta, heart, leukocyte, ovary and testis.

Its subcellular location is the cytoplasm. It catalyses the reaction ethanolamine + ATP = phosphoethanolamine + ADP + H(+). It participates in phospholipid metabolism; phosphatidylethanolamine biosynthesis; phosphatidylethanolamine from ethanolamine: step 1/3. Highly specific for ethanolamine phosphorylation. May be a rate-controlling step in phosphatidylethanolamine biosynthesis. This Homo sapiens (Human) protein is Ethanolamine kinase 1.